The chain runs to 285 residues: Phosphatidylserine decarboxylase proenzyme (285 aa).

Catalysis depends on charge relay system; for autoendoproteolytic cleavage activity residues Asp-89, His-146, and Ser-252. Ser-252 serves as the catalytic Schiff-base intermediate with substrate; via pyruvic acid; for decarboxylase activity. Ser-252 carries the post-translational modification Pyruvic acid (Ser); by autocatalysis.

This sequence belongs to the phosphatidylserine decarboxylase family. PSD-B subfamily. Prokaryotic type I sub-subfamily. As to quaternary structure, heterodimer of a large membrane-associated beta subunit and a small pyruvoyl-containing alpha subunit. Pyruvate serves as cofactor. In terms of processing, is synthesized initially as an inactive proenzyme. Formation of the active enzyme involves a self-maturation process in which the active site pyruvoyl group is generated from an internal serine residue via an autocatalytic post-translational modification. Two non-identical subunits are generated from the proenzyme in this reaction, and the pyruvate is formed at the N-terminus of the alpha chain, which is derived from the carboxyl end of the proenzyme. The autoendoproteolytic cleavage occurs by a canonical serine protease mechanism, in which the side chain hydroxyl group of the serine supplies its oxygen atom to form the C-terminus of the beta chain, while the remainder of the serine residue undergoes an oxidative deamination to produce ammonia and the pyruvoyl prosthetic group on the alpha chain. During this reaction, the Ser that is part of the protease active site of the proenzyme becomes the pyruvoyl prosthetic group, which constitutes an essential element of the active site of the mature decarboxylase.

It localises to the cell membrane. The enzyme catalyses a 1,2-diacyl-sn-glycero-3-phospho-L-serine + H(+) = a 1,2-diacyl-sn-glycero-3-phosphoethanolamine + CO2. The protein operates within phospholipid metabolism; phosphatidylethanolamine biosynthesis; phosphatidylethanolamine from CDP-diacylglycerol: step 2/2. Its function is as follows. Catalyzes the formation of phosphatidylethanolamine (PtdEtn) from phosphatidylserine (PtdSer). This is Phosphatidylserine decarboxylase proenzyme from Vibrio campbellii (strain ATCC BAA-1116).